A 509-amino-acid chain; its full sequence is Coiled-coil domain-containing protein 181 (509 aa).

Positions 46 to 82 are enriched in basic and acidic residues; it reads ENINQDLKENETVMEHTKRHSDPDKSLQDEVSPRRND. Disordered regions lie at residues 46–120 and 241–367; these read ENIN…EEED and PINN…EEKE. Composition is skewed to polar residues over residues 243 to 266 and 300 to 334; these read NNAN…SVSG and TCPS…STYC. A coiled-coil region spans residues 335–375; that stretch reads LSPRQKELQKQLEEKREKLKREEERRKIEEEKEKKRENDIV. The span at 338–367 shows a compositional bias: basic and acidic residues; it reads RQKELQKQLEEKREKLKREEERRKIEEEKE.

Belongs to the CCDC181 family. In terms of assembly, homodimer. Interacts with HOOK1. Interacts with HOOK2. Interacts with HOOK3.

The protein localises to the cytoplasm. The protein resides in the cytoskeleton. Its subcellular location is the cell projection. It is found in the cilium. It localises to the flagellum. Functionally, microtubule-binding protein that localizes to the microtubular manchette of elongating spermatids. The protein is Coiled-coil domain-containing protein 181 of Homo sapiens (Human).